Here is a 340-residue protein sequence, read N- to C-terminus: Oxygen-dependent coproporphyrinogen-III oxidase (340 aa).

The segment covering 1-14 (MTVSPTTQPQTNHS) has biased composition (polar residues). Residues 1-22 (MTVSPTTQPQTNHSLPPADAKQ) form a disordered region. Position 109 (serine 109) interacts with substrate. Residues histidine 113 and histidine 123 each contribute to the a divalent metal cation site. Residue histidine 123 is the Proton donor of the active site. Residue 125–127 (NYR) coordinates substrate. The a divalent metal cation site is built by histidine 157 and histidine 187. The important for dimerization stretch occupies residues 278 to 313 (YVEFNLVYDRGTIFGLQTNGRTESILMSLPPLVRWQ). 296–298 (NGR) contacts substrate.

Belongs to the aerobic coproporphyrinogen-III oxidase family. Homodimer. A divalent metal cation is required as a cofactor.

It localises to the cytoplasm. It carries out the reaction coproporphyrinogen III + O2 + 2 H(+) = protoporphyrinogen IX + 2 CO2 + 2 H2O. It participates in porphyrin-containing compound metabolism; protoporphyrin-IX biosynthesis; protoporphyrinogen-IX from coproporphyrinogen-III (O2 route): step 1/1. Its function is as follows. Involved in the heme and chlorophyll biosynthesis. Catalyzes the aerobic oxidative decarboxylation of propionate groups of rings A and B of coproporphyrinogen-III to yield the vinyl groups in protoporphyrinogen-IX. The protein is Oxygen-dependent coproporphyrinogen-III oxidase of Synechocystis sp. (strain ATCC 27184 / PCC 6803 / Kazusa).